The sequence spans 320 residues: MTFRARHLLGIEQLAPDEIRSVLDLADSYVDLNRRTMKQSDALAGMTQINMFFENSTRTQSSFELAGKRLGADVMNMAVAQSSVKKGETLLDTAMTLNAMHPDLLVVRHPASGAVNLLASKVNCAVLNAGDGRHEHPTQALLDALTIRRAKGRIQRLTVAICGDIAHSRVARSNLILLGKMENRVRLIAPPTLMPPGVGEFGCELYDDMKKGLEGADVVMMLRLQKERMDGAFIPSEREYYHRFGLDADKLAFAREDAIVMHPGPMNRGVEIDGTLADDINRSVIQDQVEMGVAVRMACMDLLARNLRAERGRAAVGVMV.

2 residues coordinate carbamoyl phosphate: arginine 58 and threonine 59. Lysine 86 serves as a coordination point for L-aspartate. Carbamoyl phosphate is bound by residues arginine 108, histidine 136, and glutamine 139. Residues arginine 169 and arginine 223 each coordinate L-aspartate. Residues glycine 264 and proline 265 each coordinate carbamoyl phosphate.

The protein belongs to the aspartate/ornithine carbamoyltransferase superfamily. ATCase family. Heterododecamer (2C3:3R2) of six catalytic PyrB chains organized as two trimers (C3), and six regulatory PyrI chains organized as three dimers (R2).

The catalysed reaction is carbamoyl phosphate + L-aspartate = N-carbamoyl-L-aspartate + phosphate + H(+). It participates in pyrimidine metabolism; UMP biosynthesis via de novo pathway; (S)-dihydroorotate from bicarbonate: step 2/3. In terms of biological role, catalyzes the condensation of carbamoyl phosphate and aspartate to form carbamoyl aspartate and inorganic phosphate, the committed step in the de novo pyrimidine nucleotide biosynthesis pathway. This Cereibacter sphaeroides (strain ATCC 17025 / ATH 2.4.3) (Rhodobacter sphaeroides) protein is Aspartate carbamoyltransferase catalytic subunit.